The sequence spans 183 residues: Large ribosomal subunit protein mL43 (183 aa).

2 disordered regions span residues 120 to 144 (HTDNPSIQGQWTPSPTNGLPSTGCG) and 162 to 183 (PGALDRERDRIGSSFGFQAQAE). Positions 122-139 (DNPSIQGQWTPSPTNGLP) are enriched in polar residues. Over residues 162-172 (PGALDRERDRI) the composition is skewed to basic and acidic residues.

Belongs to the mitochondrion-specific ribosomal protein mL43 family. Component of the mitochondrial ribosome large subunit (39S) which comprises a 16S rRNA and about 50 distinct proteins. Ubiquitous with the highest levels in the liver, heart and kidneys. The skeletal muscle, brain and testis showed lower but detectable expression. Expression is coregulated with TWNK.

The protein resides in the mitochondrion. The polypeptide is Large ribosomal subunit protein mL43 (Mrpl43) (Mus musculus (Mouse)).